A 325-amino-acid chain; its full sequence is Homocysteine S-methyltransferase 2 (325 aa).

One can recognise a Hcy-binding domain in the interval 6–321; sequence LKQFLADNPK…KDIQEISAAV (316 aa). Thr-138 bears the Phosphothreonine mark. Positions 239, 306, and 307 each coordinate Zn(2+).

Requires Zn(2+) as cofactor.

It localises to the cytoplasm. The protein resides in the nucleus. It carries out the reaction S-methyl-L-methionine + L-homocysteine = 2 L-methionine + H(+). Its function is as follows. Homocysteine S-methyltransferase involved in the conversion of S-adenosylmethionine (AdoMet) to methionine to control the methionine/AdoMet ratio. Also converts S-methylmethionine (SMM) to methionine. This is Homocysteine S-methyltransferase 2 (SAM4) from Saccharomyces cerevisiae (strain ATCC 204508 / S288c) (Baker's yeast).